Here is a 131-residue protein sequence, read N- to C-terminus: Small ribosomal subunit protein uS8 (131 aa).

It belongs to the universal ribosomal protein uS8 family. In terms of assembly, part of the 30S ribosomal subunit. Contacts proteins S5 and S12.

In terms of biological role, one of the primary rRNA binding proteins, it binds directly to 16S rRNA central domain where it helps coordinate assembly of the platform of the 30S subunit. This is Small ribosomal subunit protein uS8 from Nautilia profundicola (strain ATCC BAA-1463 / DSM 18972 / AmH).